Reading from the N-terminus, the 343-residue chain is Holliday junction branch migration complex subunit RuvB (343 aa).

The large ATPase domain (RuvB-L) stretch occupies residues 1-182 (MTDPIPLHTP…FGIPVRLNFY (182 aa)). Residues Leu21, Arg22, Gly63, Lys66, Thr67, Thr68, Arg172, Tyr182, and Arg219 each coordinate ATP. Thr67 contacts Mg(2+). Residues 183 to 253 (TEEELEKVVT…IADAALTRLE (71 aa)) form a small ATPAse domain (RuvB-S) region. The segment at 256–343 (GLGLDAMDRR…SQTGLFDGKS (88 aa)) is head domain (RuvB-H). Residues Arg292, Arg311, and Arg316 each contribute to the DNA site.

This sequence belongs to the RuvB family. Homohexamer. Forms an RuvA(8)-RuvB(12)-Holliday junction (HJ) complex. HJ DNA is sandwiched between 2 RuvA tetramers; dsDNA enters through RuvA and exits via RuvB. An RuvB hexamer assembles on each DNA strand where it exits the tetramer. Each RuvB hexamer is contacted by two RuvA subunits (via domain III) on 2 adjacent RuvB subunits; this complex drives branch migration. In the full resolvosome a probable DNA-RuvA(4)-RuvB(12)-RuvC(2) complex forms which resolves the HJ.

Its subcellular location is the cytoplasm. It catalyses the reaction ATP + H2O = ADP + phosphate + H(+). Its function is as follows. The RuvA-RuvB-RuvC complex processes Holliday junction (HJ) DNA during genetic recombination and DNA repair, while the RuvA-RuvB complex plays an important role in the rescue of blocked DNA replication forks via replication fork reversal (RFR). RuvA specifically binds to HJ cruciform DNA, conferring on it an open structure. The RuvB hexamer acts as an ATP-dependent pump, pulling dsDNA into and through the RuvAB complex. RuvB forms 2 homohexamers on either side of HJ DNA bound by 1 or 2 RuvA tetramers; 4 subunits per hexamer contact DNA at a time. Coordinated motions by a converter formed by DNA-disengaged RuvB subunits stimulates ATP hydrolysis and nucleotide exchange. Immobilization of the converter enables RuvB to convert the ATP-contained energy into a lever motion, pulling 2 nucleotides of DNA out of the RuvA tetramer per ATP hydrolyzed, thus driving DNA branch migration. The RuvB motors rotate together with the DNA substrate, which together with the progressing nucleotide cycle form the mechanistic basis for DNA recombination by continuous HJ branch migration. Branch migration allows RuvC to scan DNA until it finds its consensus sequence, where it cleaves and resolves cruciform DNA. This is Holliday junction branch migration complex subunit RuvB from Erythrobacter litoralis (strain HTCC2594).